A 247-amino-acid chain; its full sequence is Potassium channel Ftrac_2467 (247 aa).

6 helical membrane passes run 23 to 44, 56 to 78, 89 to 117, 142 to 165, 187 to 210, and 215 to 237; these read TRIE…VLSS, SMRD…YQHY, KVTI…RFLS, LKLL…LMYW, SIIA…IDPW, and TTIL…GRIT. Positions 24-30 match the RxxxFSD motif motif; sequence RIETFSD.

This sequence belongs to the TMEM175 family. As to quaternary structure, homotetramer.

Its subcellular location is the cell membrane. It catalyses the reaction K(+)(in) = K(+)(out). Potassium channel; forms a potassium-permeable leak-like channel with weak selectivity for potassium. The channel is permeable for K(+), Rb(+) and Cs(+). The sequence is that of Potassium channel Ftrac_2467 from Marivirga tractuosa (strain ATCC 23168 / DSM 4126 / NBRC 15989 / NCIMB 1408 / VKM B-1430 / H-43) (Microscilla tractuosa).